Consider the following 186-residue polypeptide: Threonylcarbamoyl-AMP synthase (186 aa).

The YrdC-like domain occupies 2-186; that stretch reads PNEFELAVAA…ARTGAIIRPS (185 aa).

It belongs to the SUA5 family. TsaC subfamily.

The protein resides in the cytoplasm. It catalyses the reaction L-threonine + hydrogencarbonate + ATP = L-threonylcarbamoyladenylate + diphosphate + H2O. Functionally, required for the formation of a threonylcarbamoyl group on adenosine at position 37 (t(6)A37) in tRNAs that read codons beginning with adenine. Catalyzes the conversion of L-threonine, HCO(3)(-)/CO(2) and ATP to give threonylcarbamoyl-AMP (TC-AMP) as the acyladenylate intermediate, with the release of diphosphate. The chain is Threonylcarbamoyl-AMP synthase from Aeromonas hydrophila subsp. hydrophila (strain ATCC 7966 / DSM 30187 / BCRC 13018 / CCUG 14551 / JCM 1027 / KCTC 2358 / NCIMB 9240 / NCTC 8049).